An 83-amino-acid chain; its full sequence is Small ribosomal subunit protein bS16 (83 aa).

The protein belongs to the bacterial ribosomal protein bS16 family.

The sequence is that of Small ribosomal subunit protein bS16 from Syntrophus aciditrophicus (strain SB).